The sequence spans 326 residues: MKIPLAVILGPTGTGKTKLSLELAKYLPVEIVSVDSMQIYQGMDIGTAKPSLEDREKVPHHLIDIVLPDYFFTVAEFRERALKVIEEIYARRRFPLLVGGTPLYYKVLFGEFSIPHVPPDLEFRRKMKELAEKEGEYKLYEELKKIDPKTASKIHPRDLKRIIRALEVYYKVGKPISELAGEKKEDRFYISKIGLYMPRDLHYRILEERVDKMIEQGLVDEVRNLYLKGINENFVSMQGIGYKEILRYLRGELTLEESINLIKKRTKEFVKRQYTWFKKYKDIHWFDVSQYSLSQLAKLVYNTIINDWENQGYKYQNREGVNYFND.

10 to 17 is a binding site for ATP; that stretch reads GPTGTGKT. 12–17 contacts substrate; the sequence is TGTGKT. Residues 35–38 form an interaction with substrate tRNA region; that stretch reads DSMQ.

Belongs to the IPP transferase family. As to quaternary structure, monomer. The cofactor is Mg(2+).

The catalysed reaction is adenosine(37) in tRNA + dimethylallyl diphosphate = N(6)-dimethylallyladenosine(37) in tRNA + diphosphate. Catalyzes the transfer of a dimethylallyl group onto the adenine at position 37 in tRNAs that read codons beginning with uridine, leading to the formation of N6-(dimethylallyl)adenosine (i(6)A). The chain is tRNA dimethylallyltransferase from Dictyoglomus turgidum (strain DSM 6724 / Z-1310).